The primary structure comprises 257 residues: NH(3)-dependent NAD(+) synthetase (257 aa).

An ATP-binding site is contributed by 32 to 39; it reads GLSGGVDS. Asp38 contacts Mg(2+). Arg113 contributes to the deamido-NAD(+) binding site. Thr133 contributes to the ATP binding site. Glu138 contributes to the Mg(2+) binding site. Residues Lys162 and Ser184 each contribute to the ATP site.

Belongs to the NAD synthetase family. Homodimer.

The enzyme catalyses deamido-NAD(+) + NH4(+) + ATP = AMP + diphosphate + NAD(+) + H(+). It functions in the pathway cofactor biosynthesis; NAD(+) biosynthesis; NAD(+) from deamido-NAD(+) (ammonia route): step 1/1. Its function is as follows. Catalyzes the ATP-dependent amidation of deamido-NAD to form NAD. Uses ammonia as a nitrogen source. This is NH(3)-dependent NAD(+) synthetase from Wolinella succinogenes (strain ATCC 29543 / DSM 1740 / CCUG 13145 / JCM 31913 / LMG 7466 / NCTC 11488 / FDC 602W) (Vibrio succinogenes).